Here is a 361-residue protein sequence, read N- to C-terminus: MSKRAFNFCAGPAALPEAVLQRAQAELLDWQGRGLSVMEMSHRSDAYVAIAEKAEQDLRDLMAIPSDYKVLFLQGGASQQFAEIPLNLLPEGGVADYVDTGIWSRKSIEEARRFGNVNLAASAKPYDYFAISGQNDWQLSDNAAYLHYASNETIGGLQFDWVPELGDTPLVVDMSSDILSRAIDVSKFGLIYAGAQKNIGPSGLVVVIVRDDLLGKARSSCPTMLDYKIAADNGSMYNTPATFSWYLSGLVFEWLKEQGGVEVMEQRNRAKKELLYGFIDASEFYTNPIAENARSWMNVPFRLADERLDKAFLAGADARGLLNLKGHRSVGGMRASIYNAVGLDAVEALVAYMAEFEKEHG.

Arginine 43 serves as a coordination point for L-glutamate. Pyridoxal 5'-phosphate is bound by residues 77-78, tryptophan 103, threonine 153, aspartate 173, and glutamine 196; that span reads AS. Lysine 197 is subject to N6-(pyridoxal phosphate)lysine. 238-239 contacts pyridoxal 5'-phosphate; it reads NT.

It belongs to the class-V pyridoxal-phosphate-dependent aminotransferase family. SerC subfamily. As to quaternary structure, homodimer. It depends on pyridoxal 5'-phosphate as a cofactor.

The protein localises to the cytoplasm. It catalyses the reaction O-phospho-L-serine + 2-oxoglutarate = 3-phosphooxypyruvate + L-glutamate. The enzyme catalyses 4-(phosphooxy)-L-threonine + 2-oxoglutarate = (R)-3-hydroxy-2-oxo-4-phosphooxybutanoate + L-glutamate. It functions in the pathway amino-acid biosynthesis; L-serine biosynthesis; L-serine from 3-phospho-D-glycerate: step 2/3. The protein operates within cofactor biosynthesis; pyridoxine 5'-phosphate biosynthesis; pyridoxine 5'-phosphate from D-erythrose 4-phosphate: step 3/5. Catalyzes the reversible conversion of 3-phosphohydroxypyruvate to phosphoserine and of 3-hydroxy-2-oxo-4-phosphonooxybutanoate to phosphohydroxythreonine. This chain is Phosphoserine aminotransferase, found in Stutzerimonas stutzeri (Pseudomonas stutzeri).